A 389-amino-acid polypeptide reads, in one-letter code: Probable dual-specificity RNA methyltransferase RlmN (389 aa).

Glutamate 114 acts as the Proton acceptor in catalysis. Residues 120 to 358 (QHYGLSVCVT…CVVRQEHGTD (239 aa)) enclose the Radical SAM core domain. A disulfide bridge connects residues cysteine 127 and cysteine 363. [4Fe-4S] cluster-binding residues include cysteine 134, cysteine 138, and cysteine 141. S-adenosyl-L-methionine is bound by residues 186–187 (GE), serine 218, 241–243 (SLH), and asparagine 319. Cysteine 363 functions as the S-methylcysteine intermediate in the catalytic mechanism. The disordered stretch occupies residues 370-389 (TMKRDRQKAVAEASGKSEGK). Positions 371 to 389 (MKRDRQKAVAEASGKSEGK) are enriched in basic and acidic residues.

The protein belongs to the radical SAM superfamily. RlmN family. [4Fe-4S] cluster serves as cofactor.

It localises to the cytoplasm. The catalysed reaction is adenosine(2503) in 23S rRNA + 2 reduced [2Fe-2S]-[ferredoxin] + 2 S-adenosyl-L-methionine = 2-methyladenosine(2503) in 23S rRNA + 5'-deoxyadenosine + L-methionine + 2 oxidized [2Fe-2S]-[ferredoxin] + S-adenosyl-L-homocysteine. The enzyme catalyses adenosine(37) in tRNA + 2 reduced [2Fe-2S]-[ferredoxin] + 2 S-adenosyl-L-methionine = 2-methyladenosine(37) in tRNA + 5'-deoxyadenosine + L-methionine + 2 oxidized [2Fe-2S]-[ferredoxin] + S-adenosyl-L-homocysteine. Specifically methylates position 2 of adenine 2503 in 23S rRNA and position 2 of adenine 37 in tRNAs. The chain is Probable dual-specificity RNA methyltransferase RlmN from Streptococcus thermophilus (strain CNRZ 1066).